The primary structure comprises 312 residues: tRNA-cytidine(32) 2-sulfurtransferase (312 aa).

The short motif at 39–44 is the PP-loop motif element; sequence SGGKDS. Residues Cys114, Cys117, and Cys205 each contribute to the [4Fe-4S] cluster site.

Belongs to the TtcA family. In terms of assembly, homodimer. Requires Mg(2+) as cofactor. [4Fe-4S] cluster is required as a cofactor.

The protein localises to the cytoplasm. The enzyme catalyses cytidine(32) in tRNA + S-sulfanyl-L-cysteinyl-[cysteine desulfurase] + AH2 + ATP = 2-thiocytidine(32) in tRNA + L-cysteinyl-[cysteine desulfurase] + A + AMP + diphosphate + H(+). It functions in the pathway tRNA modification. Functionally, catalyzes the ATP-dependent 2-thiolation of cytidine in position 32 of tRNA, to form 2-thiocytidine (s(2)C32). The sulfur atoms are provided by the cysteine/cysteine desulfurase (IscS) system. This is tRNA-cytidine(32) 2-sulfurtransferase from Ralstonia nicotianae (strain ATCC BAA-1114 / GMI1000) (Ralstonia solanacearum).